Consider the following 390-residue polypeptide: MLGLKGCLTILIGYVIAVCALFSSRGRNPSLTDWEKLKDQKISNIDNFGLTGQHLLAFFQENLPFLSFSEEKYRHKHVSLYYDVFKEYILRRASSKKCLPVDSAIAKLNKDVNPMPVHSHNDYWRKLPLFEGLAYGASSTEADVWNIDEKILAVGHNEAYLDPVELTLDKLYTGPLLEILDEVNCQDSDSDRKNGVFFNSPETSLFFYIDFKSDDNELTYKLLMEQYFKSLIDSGYLTYYDMKKDEIIWRPVTVILTGNYPTSLDILDNGNDNGYFESSQRFAFLDAPLLSLEPKYSKLSVAATVSFSQLMKHCGSDHWKVSLRGRMDSNEISCAKSIIDGAHALKLKTRIWGAPTWPANLVETISRQIIHDLGSDLLNLDNLFMASSLI.

Positions 1–26 are cleaved as a signal peptide; it reads MLGLKGCLTILIGYVIAVCALFSSRG.

This sequence belongs to the AIM6 family.

This is Altered inheritance of mitochondria protein 6 (AIM6) from Saccharomyces cerevisiae (strain RM11-1a) (Baker's yeast).